A 313-amino-acid chain; its full sequence is Pyrimidine-specific ribonucleoside hydrolase RihB (313 aa).

Catalysis depends on aspartate 11, which acts as the Proton acceptor. Positions 11, 16, and 124 each coordinate Ca(2+). Residues glutamine 227 and histidine 239 each coordinate substrate. A Ca(2+)-binding site is contributed by aspartate 240.

This sequence belongs to the IUNH family. RihB subfamily. Homotetramer. Requires Ca(2+) as cofactor.

The catalysed reaction is a pyrimidine ribonucleoside + H2O = a pyrimidine nucleobase + D-ribose. Hydrolyzes cytidine or uridine to ribose and cytosine or uracil, respectively. Has a clear preference for cytidine over uridine. Strictly specific for ribonucleosides. The protein is Pyrimidine-specific ribonucleoside hydrolase RihB of Escherichia coli (strain K12 / DH10B).